The following is a 267-amino-acid chain: MPQALPATIVATHLERIRRSVPLTHVITNDVVTGFTANVLLALGAAPAMITAPEEAGSFAAIASVLSVNVGTLTSAQAATIRIAVQSANQAGTPWVLDPVAAGVLPYRTELCRELLQQHPAAIRGNASEIMALAGQAAAGKGVDSANQSDQAIEAAQVLAKSSGAIVAVTGEIDYITDGERVVSIKAGDPLMTRVTGTGCALSSVVAAFIAGCEEKDRLDAVASACAVMAIAGQRAAAKAKGPGSFVPAFLDNLYLLDAVTIAEALA.

Methionine 49 contacts substrate. The ATP site is built by arginine 124 and threonine 170. Position 197 (glycine 197) interacts with substrate.

It belongs to the Thz kinase family. Mg(2+) is required as a cofactor.

The catalysed reaction is 5-(2-hydroxyethyl)-4-methylthiazole + ATP = 4-methyl-5-(2-phosphooxyethyl)-thiazole + ADP + H(+). The protein operates within cofactor biosynthesis; thiamine diphosphate biosynthesis; 4-methyl-5-(2-phosphoethyl)-thiazole from 5-(2-hydroxyethyl)-4-methylthiazole: step 1/1. In terms of biological role, catalyzes the phosphorylation of the hydroxyl group of 4-methyl-5-beta-hydroxyethylthiazole (THZ). This Tolumonas auensis (strain DSM 9187 / NBRC 110442 / TA 4) protein is Hydroxyethylthiazole kinase.